We begin with the raw amino-acid sequence, 159 residues long: uncharacterized protein (159 aa).

The next 3 membrane-spanning stretches (helical) occupy residues 17 to 37, 44 to 64, and 67 to 87; these read FFFFFFFFSLPLSSFKLNLSS, WLIVFLLDFGEIMFPAPPLPI, and FSGALLPLSLFLGFLDVDLIA.

The protein localises to the membrane. This is an uncharacterized protein from Saccharomyces cerevisiae (strain ATCC 204508 / S288c) (Baker's yeast).